A 347-amino-acid polypeptide reads, in one-letter code: S-adenosylmethionine:tRNA ribosyltransferase-isomerase (347 aa).

It belongs to the QueA family. As to quaternary structure, monomer.

The protein localises to the cytoplasm. It catalyses the reaction 7-aminomethyl-7-carbaguanosine(34) in tRNA + S-adenosyl-L-methionine = epoxyqueuosine(34) in tRNA + adenine + L-methionine + 2 H(+). The protein operates within tRNA modification; tRNA-queuosine biosynthesis. Transfers and isomerizes the ribose moiety from AdoMet to the 7-aminomethyl group of 7-deazaguanine (preQ1-tRNA) to give epoxyqueuosine (oQ-tRNA). This chain is S-adenosylmethionine:tRNA ribosyltransferase-isomerase, found in Pseudomonas paraeruginosa (strain DSM 24068 / PA7) (Pseudomonas aeruginosa (strain PA7)).